Reading from the N-terminus, the 298-residue chain is Protease HtpX homolog (298 aa).

The next 2 helical transmembrane spans lie at 14 to 34 (ILVM…IGYL) and 39 to 59 (VIGG…VIIG). His144 serves as a coordination point for Zn(2+). Glu145 is an active-site residue. His148 is a Zn(2+) binding site. Transmembrane regions (helical) follow at residues 159-179 (IALA…NFWW) and 195-215 (IFAI…ATIA). Position 224 (Glu224) interacts with Zn(2+).

The protein belongs to the peptidase M48B family. Zn(2+) serves as cofactor.

It localises to the cell membrane. In Limosilactobacillus reuteri (strain DSM 20016) (Lactobacillus reuteri), this protein is Protease HtpX homolog.